The following is a 376-amino-acid chain: RCC1 domain-containing protein 1 (376 aa).

Residues 1–169 (MAEERPGAWF…ARQLELGAEH (169 aa)) form an interaction with KDM8 region. The stretch at 6 to 56 (PGAWFGFGFCGFGQELGSGRGRQVHSPSPLRAGVDICRVSASWSYTAFVTR) is one RCC1 1 repeat. Position 141 is a (3R)-3-hydroxyarginine (Arg141). RCC1 repeat units follow at residues 176-227 (AGQV…CVSE), 229-317 (GDIY…VVTR), and 318-371 (TGEL…VYAV).

Found in a complex with KDM8. Interacts (via N-terminus) with KDM8 (via N-terminus). Post-translationally, specifically hydroxylated (with R stereochemistry) at C-3 of ARG-141 by KDM8.

The protein localises to the chromosome. Its function is as follows. Plays a role in transcriptional repression of satellite repeats, possibly by regulating H3K36 methylation levels in centromeric regions together with KDM8. Possibly together with KDM8, is involved in proper mitotic spindle organization and chromosome segregation. Plays a role in regulating alpha-tubulin deacetylation and cytoskeletal microtubule stability, thereby promoting cell migration and TGF-beta-induced epithelial to mesenchymal transition (EMT), potentially through the inhibition of KDM8. The polypeptide is RCC1 domain-containing protein 1 (Homo sapiens (Human)).